A 35-amino-acid chain; its full sequence is LRIPCCPVNLKRLLVVVVVVVLVVVVIVGALLMGL.

Residues cysteine 5 and cysteine 6 are each lipidated (S-palmitoyl cysteine).

The protein localises to the secreted. It localises to the extracellular space. The protein resides in the surface film. Pulmonary surfactant associated proteins promote alveolar stability by lowering the surface tension at the air-liquid interface in the peripheral air spaces. The protein is Surfactant protein C (SFTPC) of Sus scrofa (Pig).